Reading from the N-terminus, the 355-residue chain is Probable butyrate kinase (355 aa).

It belongs to the acetokinase family.

Its subcellular location is the cytoplasm. It carries out the reaction butanoate + ATP = butanoyl phosphate + ADP. This is Probable butyrate kinase from Listeria monocytogenes serotype 4b (strain CLIP80459).